Here is a 155-residue protein sequence, read N- to C-terminus: Shadow of prion protein (155 aa).

An N-terminal signal peptide occupies residues 1–27 (MSGMNQVVATCWTCLLLSAFLCEPVLS). Residues 29–71 (GGRGGSRGSSRGSHSRSPKAGGYRGGGPHNGGTRGSRYRGRSS) are disordered. Over residues 50–62 (GYRGGGPHNGGTR) the composition is skewed to gly residues. Asn-113 carries an N-linked (GlcNAc...) asparagine glycan. The GPI-anchor amidated serine moiety is linked to residue Ser-125. Positions 126-155 (TQNGSSLSQLVSIIIATFSPKYGLLMDSIL) are cleaved as a propeptide — removed in mature form. N-linked (GlcNAc...) asparagine glycosylation is present at Asn-128.

This sequence belongs to the SPRN family.

The protein localises to the cell membrane. Its function is as follows. Prion-like protein that has PrP(C)-like neuroprotective activity. The sequence is that of Shadow of prion protein (sprn) from Gasterosteus aculeatus (Three-spined stickleback).